A 131-amino-acid chain; its full sequence is Histone H2A (131 aa).

The segment at 1 to 24 is disordered; that stretch reads MSSGGKGKASSETKSSSRSSKAGL. N6-acetyllysine is present on residues lysine 6 and lysine 8. The span at 8-23 shows a compositional bias: low complexity; sequence KASSETKSSSRSSKAG. N5-methylglutamine is present on glutamine 105. Serine 128 carries the post-translational modification Phosphoserine. The short motif at 128–129 is the [ST]-Q motif element; the sequence is SQ.

This sequence belongs to the histone H2A family. The nucleosome is a histone octamer containing two molecules each of H2A, H2B, H3 and H4 assembled in one H3-H4 heterotetramer and two H2A-H2B heterodimers. The octamer wraps approximately 147 bp of DNA. Phosphorylated to form H2AS128ph (gamma-H2A) in response to DNA double-strand breaks (DSBs) generated by exogenous genotoxic agents and by stalled replication forks. Phosphorylation is dependent on the DNA damage checkpoint kinases MEC1/ATR and TEL1/ATM, spreads on either side of a detected DSB site and may mark the surrounding chromatin for recruitment of proteins required for DNA damage signaling and repair. Gamma-H2A is removed from the DNA prior to the strand invasion-primer extension step of the repair process and subsequently dephosphorylated. Dephosphorylation is necessary for efficient recovery from the DNA damage checkpoint. In terms of processing, acetylated by ESA1 to form H2AK4ac and H2AK7ac.

Its subcellular location is the nucleus. The protein localises to the chromosome. In terms of biological role, core component of nucleosome which plays a central role in DNA double strand break (DSB) repair. Nucleosomes wrap and compact DNA into chromatin, limiting DNA accessibility to the cellular machineries which require DNA as a template. Histones thereby play a central role in transcription regulation, DNA repair, DNA replication and chromosomal stability. DNA accessibility is regulated via a complex set of post-translational modifications of histones, also called histone code, and nucleosome remodeling. The sequence is that of Histone H2A (HTA1) from Cryptococcus neoformans var. neoformans serotype D (strain B-3501A) (Filobasidiella neoformans).